A 246-amino-acid polypeptide reads, in one-letter code: 1-(5-phosphoribosyl)-5-[(5-phosphoribosylamino)methylideneamino] imidazole-4-carboxamide isomerase (246 aa).

Catalysis depends on aspartate 8, which acts as the Proton acceptor. Aspartate 131 serves as the catalytic Proton donor.

Belongs to the HisA/HisF family.

Its subcellular location is the cytoplasm. It catalyses the reaction 1-(5-phospho-beta-D-ribosyl)-5-[(5-phospho-beta-D-ribosylamino)methylideneamino]imidazole-4-carboxamide = 5-[(5-phospho-1-deoxy-D-ribulos-1-ylimino)methylamino]-1-(5-phospho-beta-D-ribosyl)imidazole-4-carboxamide. Its pathway is amino-acid biosynthesis; L-histidine biosynthesis; L-histidine from 5-phospho-alpha-D-ribose 1-diphosphate: step 4/9. The protein is 1-(5-phosphoribosyl)-5-[(5-phosphoribosylamino)methylideneamino] imidazole-4-carboxamide isomerase of Lactococcus lactis subsp. cremoris (strain MG1363).